The chain runs to 141 residues: Large ribosomal subunit protein uL11 (141 aa).

The tract at residues 1-23 (MAKQVTGQAKFQVPGGQATPAPP) is disordered.

Belongs to the universal ribosomal protein uL11 family. As to quaternary structure, part of the ribosomal stalk of the 50S ribosomal subunit. Interacts with L10 and the large rRNA to form the base of the stalk. L10 forms an elongated spine to which L12 dimers bind in a sequential fashion forming a multimeric L10(L12)X complex. Post-translationally, one or more lysine residues are methylated.

Forms part of the ribosomal stalk which helps the ribosome interact with GTP-bound translation factors. The protein is Large ribosomal subunit protein uL11 of Rhodopirellula baltica (strain DSM 10527 / NCIMB 13988 / SH1).